A 400-amino-acid polypeptide reads, in one-letter code: Dehydrogenase efuE (400 aa).

NAD(+)-binding positions include 222-223 (AI), 303-305 (TAR), and D329. R305 is an active-site residue. The active site involves E334. The Proton donor role is filled by H352. 352-355 (HLGG) is a binding site for NAD(+).

This sequence belongs to the D-isomer specific 2-hydroxyacid dehydrogenase family.

It participates in secondary metabolite biosynthesis; terpenoid biosynthesis. In terms of biological role, dehydrogenase; part of the gene cluster that mediates the biosynthesis of enfumafungin, a glycosylated fernene-type triterpenoid with potent antifungal activity, mediated by its interaction with beta-1,3-glucan synthase and the fungal cell wall. The pathway begins with the terpene cyclase-glycosyl transferase fusion protein that most likely uses 2,3-oxidosqualene as substrate and catalyzes glycosylation immediately after cyclization. The fernene glycoside then could be processed by the desaturase efuI which catalyzes isomerization of a double bond established by efuA to form the core structure. The latter would then undergo a series of hydroxylations in unknown order at C-2, C-19, C-23 and C-25, which would be catalyzed by two of the three cytochrome P450 monooxygenases efuB, efuG or efuH. The hydroxy-group at C-25 becomes oxidized by the dehydrogenase efuE to enable a spontaneous, non-enzymatic hemiacetal formation with C-23. After hydroxylation at C-2, acetylation by the acetyltransferase efuC takes place. The final steps in enfumafungin biosynthesis require expansion of the 5-membered ring by lactonization via a Baeyer-Villiger reaction mediated by one of the BGC's cytochrome P450 monooxygenases (efuB, efuG or efuH) followed by ring cleavage. This type of reaction would establish a double bond between C-20 and C-21 which could be reduced by the reductase efuL to form the final product. The protein is Dehydrogenase efuE of Hormonema carpetanum.